The sequence spans 345 residues: Ninja-family protein AFP1 (345 aa).

Disordered stretches follow at residues 114 to 185 and 201 to 256; these read TSLP…ATAN and QVSG…RRLS. Composition is skewed to basic and acidic residues over residues 123-132 and 222-232; these read EWRKRKEMQT and LETKASSDEAR. Positions 235-249 are enriched in low complexity; the sequence is PSTTQPQQETTTKPT.

The protein belongs to the Ninja family. As to quaternary structure, forms a heterodimer with AFP2. Interacts with ABI5/DPBF1, DPBF2, AREB3/DPBF3, ABF1, ABF3/DPBF5 and ABF4/AREB2.

The protein resides in the nucleus. In terms of biological role, acts as a negative regulator of abscisic acid (ABA) response during germination through the ubiquitin-mediated proteolysis of ABI5/DPBF1. This chain is Ninja-family protein AFP1 (AFP1), found in Arabidopsis thaliana (Mouse-ear cress).